The sequence spans 316 residues: Pantothenate kinase (316 aa).

ATP is bound at residue 95–102; the sequence is GSVAVGKS.

The protein belongs to the prokaryotic pantothenate kinase family.

It is found in the cytoplasm. The catalysed reaction is (R)-pantothenate + ATP = (R)-4'-phosphopantothenate + ADP + H(+). It participates in cofactor biosynthesis; coenzyme A biosynthesis; CoA from (R)-pantothenate: step 1/5. The sequence is that of Pantothenate kinase from Shigella boydii serotype 18 (strain CDC 3083-94 / BS512).